The following is a 616-amino-acid chain: Dihydroxy-acid dehydratase (616 aa).

A Mg(2+)-binding site is contributed by Asp-81. Cys-122 is a binding site for [2Fe-2S] cluster. 2 residues coordinate Mg(2+): Asp-123 and Lys-124. Position 124 is an N6-carboxylysine (Lys-124). Cys-195 provides a ligand contact to [2Fe-2S] cluster. A Mg(2+)-binding site is contributed by Glu-491. Residue Ser-517 is the Proton acceptor of the active site.

It belongs to the IlvD/Edd family. In terms of assembly, homodimer. [2Fe-2S] cluster serves as cofactor. It depends on Mg(2+) as a cofactor.

It catalyses the reaction (2R)-2,3-dihydroxy-3-methylbutanoate = 3-methyl-2-oxobutanoate + H2O. The enzyme catalyses (2R,3R)-2,3-dihydroxy-3-methylpentanoate = (S)-3-methyl-2-oxopentanoate + H2O. Its pathway is amino-acid biosynthesis; L-isoleucine biosynthesis; L-isoleucine from 2-oxobutanoate: step 3/4. It participates in amino-acid biosynthesis; L-valine biosynthesis; L-valine from pyruvate: step 3/4. In terms of biological role, functions in the biosynthesis of branched-chain amino acids. Catalyzes the dehydration of (2R,3R)-2,3-dihydroxy-3-methylpentanoate (2,3-dihydroxy-3-methylvalerate) into 2-oxo-3-methylpentanoate (2-oxo-3-methylvalerate) and of (2R)-2,3-dihydroxy-3-methylbutanoate (2,3-dihydroxyisovalerate) into 2-oxo-3-methylbutanoate (2-oxoisovalerate), the penultimate precursor to L-isoleucine and L-valine, respectively. This chain is Dihydroxy-acid dehydratase, found in Shewanella loihica (strain ATCC BAA-1088 / PV-4).